A 223-amino-acid polypeptide reads, in one-letter code: RNA-free ribonuclease P (223 aa).

This sequence belongs to the HARP family.

The catalysed reaction is Endonucleolytic cleavage of RNA, removing 5'-extranucleotides from tRNA precursor.. Its function is as follows. RNA-free RNase P that catalyzes the removal of the 5'-leader sequence from pre-tRNA to produce the mature 5'-terminus. This is RNA-free ribonuclease P from Methanococcus maripaludis (strain DSM 14266 / JCM 13030 / NBRC 101832 / S2 / LL).